Consider the following 97-residue polypeptide: uncharacterized protein (97 aa).

Belongs to the mycobacterial PE family.

Part of the ESX-1 / type VII specialized secretion system (T7SS), which exports several proteins including EsxA and EsxB. Plays a role in DNA conjugation, in at least a donor strain. This is an uncharacterized protein from Mycolicibacterium smegmatis (strain ATCC 700084 / mc(2)155) (Mycobacterium smegmatis).